The primary structure comprises 410 residues: Shaggy-related protein kinase epsilon (410 aa).

Ala2 is modified (N-acetylalanine). One can recognise a Protein kinase domain in the interval 74–358 (YMAERIVGQG…AMEAIVHPFF (285 aa)). ATP is bound by residues 80 to 88 (VGQGSFGIV) and Lys103. Catalysis depends on Asp199, which acts as the Proton acceptor. Tyr234 carries the post-translational modification Phosphotyrosine.

Belongs to the protein kinase superfamily. CMGC Ser/Thr protein kinase family. GSK-3 subfamily. As to quaternary structure, binds to KIB1. Post-translationally, autophosphorylated mainly on threonine and serine residues.

It catalyses the reaction L-seryl-[protein] + ATP = O-phospho-L-seryl-[protein] + ADP + H(+). The enzyme catalyses L-threonyl-[protein] + ATP = O-phospho-L-threonyl-[protein] + ADP + H(+). In terms of biological role, may mediate extracellular signals to regulate transcription in differentiating cells. The chain is Shaggy-related protein kinase epsilon (ASK5) from Arabidopsis thaliana (Mouse-ear cress).